Here is a 185-residue protein sequence, read N- to C-terminus: Peptidyl-tRNA hydrolase (185 aa).

Residue tyrosine 14 coordinates tRNA. Histidine 19 functions as the Proton acceptor in the catalytic mechanism. Residues tyrosine 65, asparagine 67, and asparagine 113 each coordinate tRNA.

The protein belongs to the PTH family. As to quaternary structure, monomer.

The protein localises to the cytoplasm. The enzyme catalyses an N-acyl-L-alpha-aminoacyl-tRNA + H2O = an N-acyl-L-amino acid + a tRNA + H(+). Functionally, hydrolyzes ribosome-free peptidyl-tRNAs (with 1 or more amino acids incorporated), which drop off the ribosome during protein synthesis, or as a result of ribosome stalling. Catalyzes the release of premature peptidyl moieties from peptidyl-tRNA molecules trapped in stalled 50S ribosomal subunits, and thus maintains levels of free tRNAs and 50S ribosomes. This chain is Peptidyl-tRNA hydrolase, found in Rickettsia bellii (strain OSU 85-389).